Consider the following 341-residue polypeptide: L-threonine 3-dehydrogenase (341 aa).

C38 provides a ligand contact to Zn(2+). Catalysis depends on charge relay system residues T40 and H43. H63, E64, C93, C96, C99, and C107 together coordinate Zn(2+). NAD(+) contacts are provided by residues I175, D195, R200, 262–264 (LGI), and 286–287 (IY).

The protein belongs to the zinc-containing alcohol dehydrogenase family. Homotetramer. Requires Zn(2+) as cofactor.

It is found in the cytoplasm. It catalyses the reaction L-threonine + NAD(+) = (2S)-2-amino-3-oxobutanoate + NADH + H(+). It participates in amino-acid degradation; L-threonine degradation via oxydo-reductase pathway; glycine from L-threonine: step 1/2. In terms of biological role, catalyzes the NAD(+)-dependent oxidation of L-threonine to 2-amino-3-ketobutyrate. The protein is L-threonine 3-dehydrogenase of Escherichia coli O127:H6 (strain E2348/69 / EPEC).